We begin with the raw amino-acid sequence, 325 residues long: Ribosomal RNA small subunit methyltransferase H (325 aa).

S-adenosyl-L-methionine-binding positions include 38–40 (GGY), aspartate 55, phenylalanine 82, aspartate 103, and glutamine 110. Disordered stretches follow at residues 256 to 275 (SGGD…AARA) and 281 to 307 (PARK…RSAV).

The protein belongs to the methyltransferase superfamily. RsmH family.

Its subcellular location is the cytoplasm. It catalyses the reaction cytidine(1402) in 16S rRNA + S-adenosyl-L-methionine = N(4)-methylcytidine(1402) in 16S rRNA + S-adenosyl-L-homocysteine + H(+). Specifically methylates the N4 position of cytidine in position 1402 (C1402) of 16S rRNA. In Sphingopyxis alaskensis (strain DSM 13593 / LMG 18877 / RB2256) (Sphingomonas alaskensis), this protein is Ribosomal RNA small subunit methyltransferase H.